Consider the following 79-residue polypeptide: Small ribosomal subunit protein bS16 (79 aa).

This sequence belongs to the bacterial ribosomal protein bS16 family.

The chain is Small ribosomal subunit protein bS16 from Solidesulfovibrio magneticus (strain ATCC 700980 / DSM 13731 / RS-1) (Desulfovibrio magneticus).